The sequence spans 190 residues: Frizzled-6 (190 aa).

In terms of domain architecture, FZ spans 1 to 20 (FGFAWPEELECSRLVNCDET). Over 1 to 89 (FGFAWPEELE…NYELDVAKSF (89 aa)) the chain is Extracellular. The helical transmembrane segment at 90–110 (IGIVSIFCLCATLFTFLTFLI) threads the bilayer. Over 111–121 (DVKRFRYPERP) the chain is Cytoplasmic. A helical membrane pass occupies residues 122 to 142 (IIYYSVCYSIVSLMYFIGFLL). The Extracellular portion of the chain corresponds to 143–169 (GNRTACNKADDKLEIGETVVLGSQNKA). N144 carries N-linked (GlcNAc...) asparagine glycosylation. The helical transmembrane segment at 170 to 190 (CTVLFMVLYFFTMAGTIWWVI) threads the bilayer.

The protein belongs to the G-protein coupled receptor Fz/Smo family.

The protein localises to the membrane. Its subcellular location is the cell membrane. The protein resides in the cell surface. It localises to the apical cell membrane. It is found in the cytoplasmic vesicle membrane. Functionally, receptor for Wnt proteins. Most of frizzled receptors are coupled to the beta-catenin canonical signaling pathway, which leads to the activation of disheveled proteins, inhibition of GSK-3 kinase, nuclear accumulation of beta-catenin and activation of Wnt target genes. A second signaling pathway involving PKC and calcium fluxes has been seen for some family members, but it is not yet clear if it represents a distinct pathway or if it can be integrated in the canonical pathway, as PKC seems to be required for Wnt-mediated inactivation of GSK-3 kinase. Both pathways seem to involve interactions with G-proteins. Activation by Wnt5A stimulates PKC activity via a G-protein-dependent mechanism. Involved in transduction and intercellular transmission of polarity information during tissue morphogenesis and/or in differentiated tissues. Together with FZD3, may be involved in the neural tube closure and plays a role in the regulation of the establishment of planar cell polarity (PCP), particularly in the orientation of asymmetric bundles of stereocilia on the apical faces of a subset of auditory and vestibular sensory cells located in the inner ear. This is Frizzled-6 (FZD6) from Gallus gallus (Chicken).